The primary structure comprises 444 residues: Adenylosuccinate synthetase (444 aa).

Residues 13–19 (GDEGKGK) and 41–43 (GHT) each bind GTP. The active-site Proton acceptor is Asp14. Mg(2+)-binding residues include Asp14 and Gly41. Residues 14 to 17 (DEGK), 39 to 42 (NAGH), Thr129, Arg143, Gln224, Thr239, and Arg303 contribute to the IMP site. Catalysis depends on His42, which acts as the Proton donor. 299–305 (TTTGRRR) is a substrate binding site. GTP-binding positions include Arg305, 331 to 333 (KLD), and 413 to 415 (SLG).

The protein belongs to the adenylosuccinate synthetase family. In terms of assembly, homodimer. The cofactor is Mg(2+).

The protein localises to the cytoplasm. The enzyme catalyses IMP + L-aspartate + GTP = N(6)-(1,2-dicarboxyethyl)-AMP + GDP + phosphate + 2 H(+). Its pathway is purine metabolism; AMP biosynthesis via de novo pathway; AMP from IMP: step 1/2. In terms of biological role, plays an important role in the de novo pathway of purine nucleotide biosynthesis. Catalyzes the first committed step in the biosynthesis of AMP from IMP. The chain is Adenylosuccinate synthetase from Synechocystis sp. (strain ATCC 27184 / PCC 6803 / Kazusa).